The following is a 623-amino-acid chain: Arginine--tRNA ligase (623 aa).

The 'HIGH' region signature appears at 116–126 (ANPIHPLHVGH).

Belongs to the class-I aminoacyl-tRNA synthetase family.

The protein localises to the cytoplasm. It carries out the reaction tRNA(Arg) + L-arginine + ATP = L-arginyl-tRNA(Arg) + AMP + diphosphate. In Sulfurisphaera tokodaii (strain DSM 16993 / JCM 10545 / NBRC 100140 / 7) (Sulfolobus tokodaii), this protein is Arginine--tRNA ligase.